The chain runs to 366 residues: GTP cyclohydrolase 1 type 2 homolog (366 aa).

5 residues coordinate Zn(2+): histidine 64, histidine 65, aspartate 102, histidine 326, and glutamate 329.

The protein belongs to the GTP cyclohydrolase I type 2/NIF3 family. In terms of assembly, homohexamer.

This chain is GTP cyclohydrolase 1 type 2 homolog, found in Staphylococcus aureus (strain MRSA252).